Consider the following 420-residue polypeptide: CinA-like protein (420 aa).

Belongs to the CinA family.

The sequence is that of CinA-like protein from Syntrophus aciditrophicus (strain SB).